The following is a 226-amino-acid chain: ATP synthase subunit a (226 aa).

6 helical membrane-spanning segments follow: residues 18-38, 79-99, 105-125, 134-154, 179-199, and 201-221; these read FITG…SLGA, LAGT…IPGF, SWSF…FEGI, FAHF…IEII, LIML…VLFF, and GILQ…GAVL.

Belongs to the ATPase A chain family. F-type ATPases have 2 components, CF(1) - the catalytic core - and CF(0) - the membrane proton channel. CF(1) has five subunits: alpha(3), beta(3), gamma(1), delta(1), epsilon(1). CF(0) has three main subunits: a(1), b(2) and c(9-12). The alpha and beta chains form an alternating ring which encloses part of the gamma chain. CF(1) is attached to CF(0) by a central stalk formed by the gamma and epsilon chains, while a peripheral stalk is formed by the delta and b chains.

It localises to the cell inner membrane. Its function is as follows. Key component of the proton channel; it plays a direct role in the translocation of protons across the membrane. The polypeptide is ATP synthase subunit a (Helicobacter pylori (strain J99 / ATCC 700824) (Campylobacter pylori J99)).